We begin with the raw amino-acid sequence, 289 residues long: Glycerol facilitator-aquaporin gla (289 aa).

Helical transmembrane passes span 10–30 (ITEFVGTALLIIMGNGAVANV) and 41–61 (SWMIIGWGYGLGVMLPAVAFG). The NPA 1 motif lies at 68 to 70 (NPA). 3 helical membrane passes run 87–107 (AQYIIAQVLGAMFGQLLIVMV), 151–171 (FLGSFVLFFGAVAATNIFFGS), and 209–229 (MIAHLFLGFLVMGLVVALGGP). The NPA 2 signature appears at 235-237 (NPA). The helical transmembrane segment at 264-284 (WYAWVPVLAPILASLAAVALF) threads the bilayer.

The protein belongs to the MIP/aquaporin (TC 1.A.8) family.

The protein localises to the cell membrane. Functionally, mixed channel protein that transports both water and glycerol. The chain is Glycerol facilitator-aquaporin gla (gla) from Lactococcus lactis subsp. cremoris (Streptococcus cremoris).